The chain runs to 576 residues: Proline--tRNA ligase (576 aa).

This sequence belongs to the class-II aminoacyl-tRNA synthetase family. ProS type 1 subfamily. Homodimer.

The protein localises to the cytoplasm. It catalyses the reaction tRNA(Pro) + L-proline + ATP = L-prolyl-tRNA(Pro) + AMP + diphosphate. Catalyzes the attachment of proline to tRNA(Pro) in a two-step reaction: proline is first activated by ATP to form Pro-AMP and then transferred to the acceptor end of tRNA(Pro). As ProRS can inadvertently accommodate and process non-cognate amino acids such as alanine and cysteine, to avoid such errors it has two additional distinct editing activities against alanine. One activity is designated as 'pretransfer' editing and involves the tRNA(Pro)-independent hydrolysis of activated Ala-AMP. The other activity is designated 'posttransfer' editing and involves deacylation of mischarged Ala-tRNA(Pro). The misacylated Cys-tRNA(Pro) is not edited by ProRS. The polypeptide is Proline--tRNA ligase (Helicobacter pylori (strain J99 / ATCC 700824) (Campylobacter pylori J99)).